The sequence spans 488 residues: MTKNNEAGWNLDHSYTTLPQSFYTEIPPTPVSSPELVKLNHSLAISLGFNPEELKKEAEIAIFAGNALPEGAHPLAQAYAGHQFGHFNMLGDGRALLIGEQMTPSGKRFDIQLKGSGPTPYSRRGDGRAALGPMLREYIISEAMYALDIPTTRSLAVVTTGEPTYRETKLPGAILTRVASSHIRVGTFQYAAARGSIEDLQSLADYTIKRHYPEIEAHENRYTALLQEVIKKQASLIAKWQLVGFIHGVMNTDNITISGETIDYGPCAFMDNYDQGTVFSSIDTQGRYAYGNQPYMAAWDLARLAESLIPILHEDEEEALKIAQDEISKFSVQYEKQWFLGMKKKLGLFSNEEQDQSLIEQLLKMMEKFKADYTNTFRSLTLNTIENTALFESPEFKEWYKLWQSRLEKQEESKENAYEMMKNNNPSIIPRNHRVEEALEAAVTNGDYSVMEKLLEALSNPYAYATEQEEYCVPPAPTNRPYRTFCGT.

Glycine 91, glycine 93, arginine 94, lysine 114, aspartate 126, glycine 127, arginine 177, and arginine 184 together coordinate ATP. The tract at residues 108-127 (RFDIQLKGSGPTPYSRRGDG) is disordered. The active-site Proton acceptor is the aspartate 253. 2 residues coordinate Mg(2+): asparagine 254 and aspartate 263. Aspartate 263 contributes to the ATP binding site.

This sequence belongs to the SELO family. Requires Mg(2+) as cofactor. The cofactor is Mn(2+).

It carries out the reaction L-seryl-[protein] + ATP = 3-O-(5'-adenylyl)-L-seryl-[protein] + diphosphate. The enzyme catalyses L-threonyl-[protein] + ATP = 3-O-(5'-adenylyl)-L-threonyl-[protein] + diphosphate. It catalyses the reaction L-tyrosyl-[protein] + ATP = O-(5'-adenylyl)-L-tyrosyl-[protein] + diphosphate. The catalysed reaction is L-histidyl-[protein] + UTP = N(tele)-(5'-uridylyl)-L-histidyl-[protein] + diphosphate. It carries out the reaction L-seryl-[protein] + UTP = O-(5'-uridylyl)-L-seryl-[protein] + diphosphate. The enzyme catalyses L-tyrosyl-[protein] + UTP = O-(5'-uridylyl)-L-tyrosyl-[protein] + diphosphate. Functionally, nucleotidyltransferase involved in the post-translational modification of proteins. It can catalyze the addition of adenosine monophosphate (AMP) or uridine monophosphate (UMP) to a protein, resulting in modifications known as AMPylation and UMPylation. The sequence is that of Protein nucleotidyltransferase YdiU from Bacillus cereus (strain AH820).